A 722-amino-acid chain; its full sequence is 1,4-alpha-glucan branching enzyme GlgB (722 aa).

Asp-401 functions as the Nucleophile in the catalytic mechanism. The active-site Proton donor is Glu-454.

The protein belongs to the glycosyl hydrolase 13 family. GlgB subfamily. In terms of assembly, monomer.

The catalysed reaction is Transfers a segment of a (1-&gt;4)-alpha-D-glucan chain to a primary hydroxy group in a similar glucan chain.. It participates in glycan biosynthesis; glycogen biosynthesis. Catalyzes the formation of the alpha-1,6-glucosidic linkages in glycogen by scission of a 1,4-alpha-linked oligosaccharide from growing alpha-1,4-glucan chains and the subsequent attachment of the oligosaccharide to the alpha-1,6 position. In Rubrobacter xylanophilus (strain DSM 9941 / JCM 11954 / NBRC 16129 / PRD-1), this protein is 1,4-alpha-glucan branching enzyme GlgB.